The chain runs to 429 residues: MLAIAGLIGCAGALATIAFRECLRQLQWWLAGADQGLVATARALPWWARLLVPTAGGLLAGLTLQYGLKWIPRKGAEDYMEAIAVGDGVLSARQSLVRSASSLCSVASGASIGREGPMVQLAAMCGSLLGRVLRHAMPVSVEHMRLLVACGAAAGITSAYNAPIAGAVFVCEIVFGAITTATLGPLLVSAVTADIIVRQFFGYGAVYAMPHFDFVSGWEVLTYLGLGLAAGMAGPLLLGLIDRARGAFARTRLPQALRLALGGLIVGALSIRVPEVWGNGYSVVNGFLHAPWLWQTVALVLVCKVGATAASAGSGAVGGVFTPTLFCGAALGLLYGTGMHALLPGAAPVPVSYAVVGMGALLAATTHAPLMSILMIFEMTLSYQVVLPLMLACITGYVTAHATGAPSVYARALARNRDDTLRLPPASSP.

11 helical membrane passes run 1–21 (MLAIAGLIGCAGALATIAFRE), 44–64 (LPWWARLLVPTAGGLLAGLTL), 146–166 (LLVACGAAAGITSAYNAPIAG), 168–188 (VFVCEIVFGAITTATLGPLLV), 200–220 (FFGYGAVYAMPHFDFVSGWEV), 221–241 (LTYLGLGLAAGMAGPLLLGLI), 259–279 (LALGGLIVGALSIRVPEVWGN), 283–303 (VVNGFLHAPWLWQTVALVLVC), 315–335 (GAVGGVFTPTLFCGAALGLLY), 354–376 (AVVGMGALLAATTHAPLMSILMI), and 383–405 (YQVVLPLMLACITGYVTAHATGA).

The protein belongs to the chloride channel (TC 2.A.49) family. ClcB subfamily.

It localises to the cell inner membrane. This Ralstonia nicotianae (strain ATCC BAA-1114 / GMI1000) (Ralstonia solanacearum) protein is Putative chloride channel protein ClcB-like.